Consider the following 507-residue polypeptide: Maturase K (507 aa).

The protein belongs to the intron maturase 2 family. MatK subfamily.

The protein resides in the plastid. The protein localises to the chloroplast. Functionally, usually encoded in the trnK tRNA gene intron. Probably assists in splicing its own and other chloroplast group II introns. The chain is Maturase K from Robinia pseudoacacia (Black locust).